A 339-amino-acid chain; its full sequence is Type IV secretion system protein PtlH homolog (339 aa).

The protein belongs to the GSP E family.

The protein is Type IV secretion system protein PtlH homolog (ptlH) of Bordetella parapertussis (strain 12822 / ATCC BAA-587 / NCTC 13253).